The primary structure comprises 218 residues: Alkylmercury lyase (218 aa).

It belongs to the MerB family.

It carries out the reaction an alkylmercury + H(+) = an alkane + Hg(2+). Functionally, cleaves the carbon-mercury bond of organomercurials such as phenylmercuric acetate. One product is Hg(2+), which is subsequently detoxified by the mercuric reductase. The chain is Alkylmercury lyase (merB1) from Bacillus cereus.